We begin with the raw amino-acid sequence, 786 residues long: Signal transducer and activator of transcription 5B (786 aa).

Y90 bears the Phosphotyrosine mark. S128 carries the phosphoserine modification. In terms of domain architecture, SH2 spans 589-686 (WNDGAILGFV…EVYSKYYTPV (98 aa)). 2 positions are modified to phosphotyrosine: Y682 and Y699.

Belongs to the transcription factor STAT family. As to quaternary structure, upon activation, forms a homodimer or a heterodimer with a related family member. Binds NR3C1. Interacts with NCOA1. Interacts with SOCS7. Interacts (via SH2 domain) with INSR. Interacts with CPEB3; this inhibits STAT5B-mediated transcriptional activation. In terms of processing, tyrosine phosphorylated in response to signaling via activated KIT, resulting in translocation to the nucleus. Tyrosine phosphorylated in response to signaling via activated FLT3; wild-type FLT3 results in much weaker phosphorylation than constitutively activated mutant FLT3. Alternatively, can be phosphorylated by JAK2. Phosphorylation at Tyr-699 by PTK6 or HCK leads to an increase of its transcriptional activity. In the virgin, found in most tissues. Particularly abundant in muscle tissue of virgin and lactating females, and of males.

The protein localises to the cytoplasm. Its subcellular location is the nucleus. Its function is as follows. Carries out a dual function: signal transduction and activation of transcription. Mediates cellular responses to the cytokine KITLG/SCF and other growth factors. Binds to the GAS element and activates PRL-induced transcription. Positively regulates hematopoietic/erythroid differentiation. In Mus musculus (Mouse), this protein is Signal transducer and activator of transcription 5B (Stat5b).